A 528-amino-acid polypeptide reads, in one-letter code: Homoserine O-acetyltransferase (528 aa).

The region spanning 60–245 (LVICHALTGS…AALLTYRSRD (186 aa)) is the AB hydrolase-1 domain. Residue Ser-154 is the Nucleophile of the active site. 2 disordered regions span residues 250–335 (RFGR…VKTQ) and 388–413 (DLSA…DATE). Residues 273–282 (QETTDPSVPS) show a composition bias toward polar residues. Positions 295–304 (AWREHNDGHR) are enriched in basic and acidic residues. The span at 389–409 (LSAPSRDTSLSSLSSGLPSSP) shows a compositional bias: low complexity. Active-site residues include Asp-438 and His-467.

This sequence belongs to the AB hydrolase superfamily. MetX family.

The protein localises to the cytoplasm. The enzyme catalyses L-homoserine + acetyl-CoA = O-acetyl-L-homoserine + CoA. Its pathway is amino-acid biosynthesis; L-methionine biosynthesis via de novo pathway; O-acetyl-L-homoserine from L-homoserine: step 1/1. With respect to regulation, inhibited by 6-carbamoyl-3a,4,5,9b-tetrahydro-3H-cyclopenta[ c]quinoline-4-carboxylic acid (CTCQC). Commits homoserine to the methionine biosynthesis pathway by catalyzing its O-acetylation. The protein is Homoserine O-acetyltransferase of Cryptococcus neoformans var. grubii serotype A (strain H99 / ATCC 208821 / CBS 10515 / FGSC 9487) (Filobasidiella neoformans var. grubii).